The sequence spans 367 residues: Phosphoribosylaminoimidazole-succinocarboxamide synthase (367 aa).

This sequence belongs to the SAICAR synthetase family.

It carries out the reaction 5-amino-1-(5-phospho-D-ribosyl)imidazole-4-carboxylate + L-aspartate + ATP = (2S)-2-[5-amino-1-(5-phospho-beta-D-ribosyl)imidazole-4-carboxamido]succinate + ADP + phosphate + 2 H(+). It functions in the pathway purine metabolism; IMP biosynthesis via de novo pathway; 5-amino-1-(5-phospho-D-ribosyl)imidazole-4-carboxamide from 5-amino-1-(5-phospho-D-ribosyl)imidazole-4-carboxylate: step 1/2. In Vibrio campbellii (strain ATCC BAA-1116), this protein is Phosphoribosylaminoimidazole-succinocarboxamide synthase.